Here is a 264-residue protein sequence, read N- to C-terminus: Short chain dehydrogenase/reductase dmxR18 (264 aa).

4 residues coordinate NADP(+): Ile24, Asp70, Asn97, and Arg130. Residues Ser146 and Ser147 each act as proton donor in the active site. 3 residues coordinate NADP(+): Tyr161, Lys165, and Thr196. The active-site Proton acceptor is the Tyr161. Lys165 (lowers pKa of active site Tyr) is an active-site residue.

It belongs to the short-chain dehydrogenases/reductases (SDR) family.

The catalysed reaction is 3,8,9,10-tetrahydroxy-6-methyl-1,4-dihydroanthracen-1-one + NADPH + H(+) = (3R)-3,8,9,10-tetrahydroxy-6-methyl-1,2,3,4-tetrahydroanthracen-1-one + NADP(+). Its pathway is secondary metabolite biosynthesis. Short chain dehydrogenase/reductase; part of the gene cluster that mediates the biosynthesis of the dimeric xanthones cryptosporioptides. The pathway begins with the synthesis of atrochrysone thioester by the polyketide synthase dmx-nrPKS. The atrochrysone carboxyl ACP thioesterase dmxR1 then breaks the thioester bond and releases the atrochrysone carboxylic acid from dmx-nrPKS. Atrochrysone carboxylic acid is decarboxylated by the decarboxylase dmxR15, and oxidized by the anthrone oxygenase dmxR16 to yield emodin. Emodin is then reduced to emodin hydroquinone by the oxidoreductase dmxR7. A-ring reduction by the short chain dehydrogenase dmxR18, dehydration by the scytalone dehydratase-like protein dmxR17 and probable spontaneous re-oxidation, results in overall deoxygenation to chrysophanol. Baeyer-Villiger oxidation by the Baeyer-Villiger monooxygenase (BVMO) dmxR6 then yields monodictylactone in equilibrium with monodictyphenone. In the case of the cryptosporioptides biosynthesis, monodictylactone is reduced at C-12 to an alcohol (by the short chain dehydrogenases dmxR12 or dmxR8) and hydroxylated at C-5 by dmxR9, yielding the electron-rich aromatic which could eliminate H(2)O to form the ortho-quinonemethide, followed by tautomerisation to paraquinone and complete the formal reduction to produce the 10-methylgroup. Conjugate addition of C-4a-OH to the resulting paraquinone by the monooxygenase dmxR10 then gives cyclohexadienone, which is then reduced at C-5 by the short chain dehydrogenase dmxR3 to give the dihydroxanthone. The 6,7-epoxide in the cryptosporioptides could be introduced by the cytochrome P450 monooxygenase dmxL3. The highly reducing PKS dmxL2 manufactures butyrate, which is further carboxylated by dmxL1 to form ethylmalonate. It is not yet clear whether the carboxylation occurs while the butyrate is attached to the ACP of dmxL2, but this unusual fungal metabolite could then be esterified to O-5 by the O-acetyltransferase dmxR13. Finally, dimerization performed by dmxR5 gives the observed dimers cryptosporioptides A, B and C as the final products of the pathway. The sequence is that of Short chain dehydrogenase/reductase dmxR18 from Cryptosporiopsis sp. (strain 8999).